We begin with the raw amino-acid sequence, 1697 residues long: UDP-sugar-dependent glycosyltransferase 52 (1697 aa).

2 disordered regions span residues 20 to 40 (HSDS…NYEN) and 142 to 166 (STDL…LMIP). Residues 234–332 (DYVLENYLYK…WYHEINRMQK (99 aa)) enclose the PH domain. 2 disordered regions span residues 573–645 (FRSK…TTHE) and 707–756 (PLDK…KQSQ). 2 stretches are compositionally biased toward low complexity: residues 584-628 (QNSQ…SSSA) and 711-722 (QQQQQQQQQQQQ). GRAM domains lie at 658 to 793 (STFH…TKER) and 881 to 948 (IKIK…KKYS). The segment covering 739–749 (TDSDTDSESDF) has biased composition (acidic residues). 4 disordered regions span residues 1011–1047 (SPSI…IHST), 1062–1085 (DGEN…SNSF), 1110–1130 (SAQQ…STTT), and 1466–1488 (EHNN…SNKS). Low complexity-rich tracts occupy residues 1026 to 1047 (PPSS…IHST), 1065 to 1084 (NNSN…KSNS), 1112 to 1130 (QQQQ…STTT), and 1469 to 1479 (NNNNNNNNNNN). An FYVE-type zinc finger spans residues 1622 to 1685 (SSAPNSCMGC…VCDKCFNDLQ (64 aa)). Residues cysteine 1628, cysteine 1631, cysteine 1647, cysteine 1650, cysteine 1655, cysteine 1658, cysteine 1677, and cysteine 1680 each contribute to the Zn(2+) site.

The protein belongs to the glycosyltransferase 28 family.

The catalysed reaction is a sterol + UDP-alpha-D-glucose = a sterol 3-beta-D-glucoside + UDP + H(+). Involved in the biosynthesis of sterol glucoside. Can use different sterols such as cholesterol, sitosterol, and ergosterol as sugar acceptors. The protein is UDP-sugar-dependent glycosyltransferase 52 (ugt52) of Dictyostelium discoideum (Social amoeba).